The following is a 497-amino-acid chain: PHD finger protein 10 (497 aa).

Residues 1–61 (MAAAGPGAAL…SSRSCETSSQ (61 aa)) form a disordered region. Phosphoserine occurs at positions 11, 35, and 49. An essential to induce neural progenitor proliferation region spans residues 88 to 184 (MLQEQVSEYL…HYKEYSQMQQ (97 aa)). Residues 88 to 294 (MLQEQVSEYL…PPLDPELPAL (207 aa)) are SAY. Lysine 240 is covalently cross-linked (Glycyl lysine isopeptide (Lys-Gly) (interchain with G-Cter in SUMO2)). Serine 269 bears the Phosphoserine mark. Residues 284-295 (EPPLDPELPALD) show a composition bias toward low complexity. Residues 284–367 (EPPLDPELPA…KRSVLSKSVP (84 aa)) are disordered. The essential to induce neural progenitor proliferation stretch occupies residues 291-333 (LPALDSDGDSDDGEDGGGDEKRKNKGTSDSSSGNVSEGDSPPD). Residues serine 296, serine 300, serine 326, and serine 330 each carry the phosphoserine modification. Over residues 296–307 (SDGDSDDGEDGG) the composition is skewed to acidic residues. Residues 317–327 (TSDSSSGNVSE) are compositionally biased toward polar residues. Basic and acidic residues predominate over residues 344–358 (KSKDKMATPRKDGSK). A PHD-type 1; degenerate zinc finger spans residues 378-435 (LCGICLKGKESNKKGKAESLIHCSQCDNSGHPSCLDMTMELVSMIKTYPWQCMECKTC). Residue lysine 384 forms a Glycyl lysine isopeptide (Lys-Gly) (interchain with G-Cter in SUMO2) linkage. The PHD-type 2; degenerate zinc finger occupies 437–480 (ICGQPHHEEEMMFCDVCDRGYHTFCVGLGAIPSGRWICDCCQRA).

This sequence belongs to the SAYP family. Component of neural progenitors-specific chromatin remodeling complex (npBAF complex) composed of at least, ARID1A/BAF250A or ARID1B/BAF250B, SMARCD1/BAF60A, SMARCD3/BAF60C, SMARCA2/BRM/BAF190B, SMARCA4/BRG1/BAF190A, SMARCB1/BAF47, SMARCC1/BAF155, SMARCE1/BAF57, SMARCC2/BAF170, PHF10/BAF45A, ACTL6A/BAF53A and actin. Interacts with ACTL6A/BAF53A, SMARCA2/BRM/BAF190B, SMARCA4/BRG1/BAF190A and PBRM1/BAF180.

It localises to the nucleus. Involved in transcription activity regulation by chromatin remodeling. Belongs to the neural progenitors-specific chromatin remodeling complex (npBAF complex) and is required for the proliferation of neural progenitors. During neural development a switch from a stem/progenitor to a post-mitotic chromatin remodeling mechanism occurs as neurons exit the cell cycle and become committed to their adult state. The transition from proliferating neural stem/progenitor cells to post-mitotic neurons requires a switch in subunit composition of the npBAF and nBAF complexes. As neural progenitors exit mitosis and differentiate into neurons, npBAF complexes which contain ACTL6A/BAF53A and PHF10/BAF45A, are exchanged for homologous alternative ACTL6B/BAF53B and DPF1/BAF45B or DPF3/BAF45C subunits in neuron-specific complexes (nBAF). The npBAF complex is essential for the self-renewal/proliferative capacity of the multipotent neural stem cells. The nBAF complex along with CREST plays a role regulating the activity of genes essential for dendrite growth. The sequence is that of PHD finger protein 10 (Phf10) from Rattus norvegicus (Rat).